Here is a 322-residue protein sequence, read N- to C-terminus: TATA box-binding protein-associated factor RNA polymerase I subunit D (322 aa).

2 disordered regions span residues 1–70 (MAQS…SIEP) and 82–116 (FKKK…RITR). Phosphoserine is present on Ser-23. Over residues 82–107 (FKKKKRKKRKKRKYEPKLRPRGRPRG) the composition is skewed to basic residues. Ser-137 is subject to Phosphoserine. A disordered region spans residues 198–219 (YMDDDGSLSPIEEPLTEDEATN). Residue Ser-232 is modified to Phosphoserine. Residues 257–267 (FSKKAKDATHR) show a composition bias toward basic and acidic residues. The disordered stretch occupies residues 257 to 276 (FSKKAKDATHREKGHRRTLK).

Component of the transcription factor SL1/TIF-IB complex, composed of TBP and at least TAF1A, TAF1B, TAF1C and TAF1D. Interacts with UBTF.

It localises to the nucleus. Functionally, component of the transcription factor SL1/TIF-IB complex, which is involved in the assembly of the PIC (preinitiation complex) during RNA polymerase I-dependent transcription. The rate of PIC formation probably is primarily dependent on the rate of association of SL1/TIF-IB with the rDNA promoter. SL1/TIF-IB is involved in stabilization of nucleolar transcription factor 1/UBTF on rDNA. Formation of SL1/TIF-IB excludes the association of TBP with TFIID subunits. This chain is TATA box-binding protein-associated factor RNA polymerase I subunit D (Taf1d), found in Mus musculus (Mouse).